Here is a 532-residue protein sequence, read N- to C-terminus: Maternal protein exuperantia (532 aa).

2 disordered regions span residues 206 to 251 (CSAS…NAVQ) and 403 to 491 (TVKP…NGLK). 2 stretches are compositionally biased toward low complexity: residues 220-231 (GSSMVSDSVSIS) and 404-417 (VKPVVKGNSNNNNN). The segment covering 454–467 (SVSSLPDSTTKTPS) has biased composition (polar residues). S467 bears the Phosphoserine mark.

As to quaternary structure, component of the osk RNP complex, which is composed of at least exuperantia (exu), ypsilon schachtel (yps), aret (bruno), cup, and the mRNA of osk. In the sponge body, forms a ribonucleoprotein complex (RNP) containing at least me31B, exu, yps and the mRNA of osk; interactions with exu and yps are RNA dependent.

Its subcellular location is the cytoplasm. It is found in the cytoplasmic ribonucleoprotein granule. Functionally, ensures the proper localization of the mRNA of the bicoid gene to the anterior regions of the oocyte thus playing a fundamental role in the establishment of the polarity of the oocyte. May bind the bcd mRNA. This Drosophila melanogaster (Fruit fly) protein is Maternal protein exuperantia (exu).